The sequence spans 149 residues: Macrodomain Ter protein (149 aa).

The protein belongs to the MatP family. In terms of assembly, homodimer.

The protein resides in the cytoplasm. In terms of biological role, required for spatial organization of the terminus region of the chromosome (Ter macrodomain) during the cell cycle. Prevents early segregation of duplicated Ter macrodomains during cell division. Binds specifically to matS, which is a 13 bp signature motif repeated within the Ter macrodomain. This Vibrio parahaemolyticus serotype O3:K6 (strain RIMD 2210633) protein is Macrodomain Ter protein.